The primary structure comprises 334 residues: ADP-L-glycero-D-manno-heptose-6-epimerase (334 aa).

Residues 11–12, 32–33, lysine 39, lysine 54, 77–81, and asparagine 94 contribute to the NADP(+) site; these read FI, DN, and QGACS. The active-site Proton acceptor is the tyrosine 141. An NADP(+)-binding site is contributed by lysine 145. Residue asparagine 171 participates in substrate binding. Positions 172 and 180 each coordinate NADP(+). Lysine 180 acts as the Proton acceptor in catalysis. Residues arginine 182, histidine 189, 203–206, arginine 216, and tyrosine 295 each bind substrate; that span reads FGSN.

This sequence belongs to the NAD(P)-dependent epimerase/dehydratase family. HldD subfamily. As to quaternary structure, homopentamer. It depends on NADP(+) as a cofactor.

The enzyme catalyses ADP-D-glycero-beta-D-manno-heptose = ADP-L-glycero-beta-D-manno-heptose. It functions in the pathway nucleotide-sugar biosynthesis; ADP-L-glycero-beta-D-manno-heptose biosynthesis; ADP-L-glycero-beta-D-manno-heptose from D-glycero-beta-D-manno-heptose 7-phosphate: step 4/4. Catalyzes the interconversion between ADP-D-glycero-beta-D-manno-heptose and ADP-L-glycero-beta-D-manno-heptose via an epimerization at carbon 6 of the heptose. The protein is ADP-L-glycero-D-manno-heptose-6-epimerase of Neisseria meningitidis serogroup C (strain 053442).